Consider the following 301-residue polypeptide: 33 kDa chaperonin (301 aa).

Cystine bridges form between Cys-239/Cys-241 and Cys-272/Cys-275.

Belongs to the HSP33 family. In terms of processing, under oxidizing conditions two disulfide bonds are formed involving the reactive cysteines. Under reducing conditions zinc is bound to the reactive cysteines and the protein is inactive.

The protein resides in the cytoplasm. In terms of biological role, redox regulated molecular chaperone. Protects both thermally unfolding and oxidatively damaged proteins from irreversible aggregation. Plays an important role in the bacterial defense system toward oxidative stress. In Nostoc sp. (strain PCC 7120 / SAG 25.82 / UTEX 2576), this protein is 33 kDa chaperonin.